The sequence spans 94 residues: Protein translocase subunit SecE (94 aa).

The segment at 1 to 32 is disordered; it reads MTDAVGSIDMPDAQDEAPDSKKSRKGGKRGKK. The segment covering 22-32 has biased composition (basic residues); sequence KSRKGGKRGKK. A helical transmembrane segment spans residues 65-85; the sequence is TVVIIFVVIMIGLVTLIDYGF.

It belongs to the SecE/SEC61-gamma family. As to quaternary structure, component of the Sec protein translocase complex. Heterotrimer consisting of SecY, SecE and SecG subunits. The heterotrimers can form oligomers, although 1 heterotrimer is thought to be able to translocate proteins. Interacts with the ribosome. Interacts with SecDF, and other proteins may be involved. Interacts with SecA.

It is found in the cell membrane. Its function is as follows. Essential subunit of the Sec protein translocation channel SecYEG. Clamps together the 2 halves of SecY. May contact the channel plug during translocation. This chain is Protein translocase subunit SecE, found in Streptomyces lividans.